The following is a 171-amino-acid chain: Ribosome maturation factor RimM (171 aa).

Residues 97–169 (DGEFYYHEII…RVDVDIMEGL (73 aa)) form the PRC barrel domain.

It belongs to the RimM family. As to quaternary structure, binds ribosomal protein uS19.

Its subcellular location is the cytoplasm. Its function is as follows. An accessory protein needed during the final step in the assembly of 30S ribosomal subunit, possibly for assembly of the head region. Essential for efficient processing of 16S rRNA. May be needed both before and after RbfA during the maturation of 16S rRNA. It has affinity for free ribosomal 30S subunits but not for 70S ribosomes. In Lactococcus lactis subsp. cremoris (strain MG1363), this protein is Ribosome maturation factor RimM.